Here is a 347-residue protein sequence, read N- to C-terminus: GPN-loop GTPase 2 (347 aa).

GTP is bound at residue 12–17 (GSGKST). The Gly-Pro-Asn (GPN)-loop; involved in dimer interface motif lies at 69 to 71 (GPN). 175 to 178 (SKID) lines the GTP pocket.

It belongs to the GPN-loop GTPase family. Heterodimers with NPA3/GPN1 or GPN3. Binds to RNA polymerase II (RNAPII).

Its subcellular location is the cytoplasm. In terms of biological role, small GTPase required for proper localization of RNA polymerase II and III (RNAPII and RNAPIII). May act at an RNAP assembly step prior to nuclear import. Required for establishment of sister chromatid cohesion. In Saccharomyces cerevisiae (strain ATCC 204508 / S288c) (Baker's yeast), this protein is GPN-loop GTPase 2.